The chain runs to 607 residues: NAD-dependent protein deacetylase sir-2.1 (607 aa).

Residues 1–68 (MSRDSGNDSE…SVSSESWQNN (68 aa)) form a disordered region. Over residues 55-64 (ESTTSVSSES) the composition is skewed to low complexity. A Deacetylase sirtuin-type domain is found at 128 to 401 (KLTNYNSLAD…DSIMEQQGKT (274 aa)). Residues 153 to 172 (GAGV…DGIY) and 237 to 240 (QNID) each bind NAD(+). His255 functions as the Proton acceptor in the catalytic mechanism. Zn(2+)-binding residues include Cys263, Cys266, Cys287, and Cys290. Residues 327–329 (GSS), 352–354 (NRE), and Cys369 contribute to the NAD(+) site. Positions 426–453 (EKRNDDSSDEPTLKKPRMSVADDSMDSE) are disordered.

Belongs to the sirtuin family. Class I subfamily. As to quaternary structure, interacts with ftt-2 and par-5. Interacts with daf-16 following heat-shock, which causes daf-16 to accumulate in the nucleus. Interaction with daf-16 is promoted by ftt-2. Interacts with transcriptional coregulator hcf-1. Requires Zn(2+) as cofactor.

It is found in the nucleus. The protein resides in the cytoplasm. The catalysed reaction is N(6)-acetyl-L-lysyl-[protein] + NAD(+) + H2O = 2''-O-acetyl-ADP-D-ribose + nicotinamide + L-lysyl-[protein]. Its function is as follows. NAD-dependent deacetylase. Involved in metabolism, apoptosis, response to oxidative stress, response to DNA damage, and determination of lifespan. Required for a reduction of the 'Lys-16' acetylation of histone H4 (H4K16ac) on dosage-compensated X chromosomes in hermaphrodites. Plays a role in germ cell and somatic cell apoptosis in response to DNA damage. Functions upstream of daf-16/Forkhead box protein O in the Insulin/IGF-1-like signaling (IIS) mediated pathway, promoting daf-16 mediated transcriptional activation and increased lifespan. May also regulate lifespan independently of daf-16 by modulating the transcription of genes involved in the stress response of the endoplasmic reticulum (ER). Functions upstream of transcriptional coregulator hcf-1, perhaps acting independently of the IIS mediated pathway, to modulate lifespan and oxidative stress response. Acts upstream of the nicotinic acid metabolism pathway, which may be linked to the regulation of longevity. Plays a role in ascaroside-mediated longevity and stress resistance. The chain is NAD-dependent protein deacetylase sir-2.1 from Caenorhabditis elegans.